A 537-amino-acid chain; its full sequence is Phosphoenolpyruvate carboxykinase (ATP) (537 aa).

The substrate site is built by R61, Y195, and K201. ATP-binding positions include K201, H220, and 236–244 (GLSGTGKTT). Positions 201 and 220 each coordinate Mn(2+). D257 lines the Mn(2+) pocket. Residues E285, R323, and T448 each coordinate ATP. R323 is a substrate binding site.

Belongs to the phosphoenolpyruvate carboxykinase (ATP) family. It depends on Mn(2+) as a cofactor.

It is found in the cytoplasm. The catalysed reaction is oxaloacetate + ATP = phosphoenolpyruvate + ADP + CO2. The protein operates within carbohydrate biosynthesis; gluconeogenesis. Its function is as follows. Involved in the gluconeogenesis. Catalyzes the conversion of oxaloacetate (OAA) to phosphoenolpyruvate (PEP) through direct phosphoryl transfer between the nucleoside triphosphate and OAA. The chain is Phosphoenolpyruvate carboxykinase (ATP) from Azorhizobium caulinodans (strain ATCC 43989 / DSM 5975 / JCM 20966 / LMG 6465 / NBRC 14845 / NCIMB 13405 / ORS 571).